The following is a 204-amino-acid chain: Histone chaperone ASF1A (204 aa).

An interaction with histone H3, CHAF1B, and HIRA region spans residues 1–156; it reads MAKVQVNNVV…TRFHINWEDN (156 aa). Residues 31–37 carry the Required for interaction with HIRA motif; the sequence is IEDLSED. Residues 155–204 are required for interaction with HIRA; that stretch reads DNTEKLEDAESSNPNLPSLLSTDALPSASKGWSTSENSLNVMLESHMDCM. Phosphoserine; by TLK2 is present on serine 192.

It belongs to the ASF1 family. As to quaternary structure, interacts with histone H3 (via C-terminus), including histone H3.1, H3.2 and H3.3, and histone H4; the interaction with H3 is direct. Probably interacts with the heterodimeric form of H3-H4 taking the place of the second dimer. Interacts with the CHAF1A, CHAF1B and RBBP4 subunits of the CAF-1 complex. Interacts with CABIN1, HAT1, HIRA, NASP, TAF1 and UBN1. Found in a soluble complex with NASP and histones H3 and H4; the interaction with NASP is probably indirect and mediated by H3-H4. Interacts with CDAN1. Found in a cytosolic complex with IPO4 and histones H3 and H4. Interacts with CREBBP. Phosphorylated by TLK1 and TLK2. Highly phosphorylated in S-phase and at lower levels in M-phase. TLK2-mediated phosphorylation at Ser-192 prevents proteasome-dependent degradation.

The protein resides in the nucleus. Functionally, histone chaperone that facilitates histone deposition and histone exchange and removal during nucleosome assembly and disassembly. Cooperates with chromatin assembly factor 1 (CAF-1) to promote replication-dependent chromatin assembly and with HIRA to promote replication-independent chromatin assembly. Promotes homologous recombination-mediated repair of double-strand breaks (DSBs) at stalled or collapsed replication forks: acts by mediating histone replacement at DSBs, leading to recruitment of the MMS22L-TONSL complex and subsequent loading of RAD51. Also involved in the nuclear import of the histone H3-H4 dimer together with importin-4 (IPO4): specifically recognizes and binds newly synthesized histones with the monomethylation of H3 'Lys-9' and acetylation at 'Lys-14' (H3K9me1K14ac) marks, and diacetylation at 'Lys-5' and 'Lys-12' of H4 (H4K5K12ac) marks in the cytosol. Required for the formation of senescence-associated heterochromatin foci (SAHF) and efficient senescence-associated cell cycle exit. The protein is Histone chaperone ASF1A (ASF1A) of Bos taurus (Bovine).